The following is a 358-amino-acid chain: UDP-N-acetylglucosamine--N-acetylmuramyl-(pentapeptide) pyrophosphoryl-undecaprenol N-acetylglucosamine transferase (358 aa).

UDP-N-acetyl-alpha-D-glucosamine is bound by residues 13–15 (TGG), N125, R161, S189, I244, and Q288.

It belongs to the glycosyltransferase 28 family. MurG subfamily.

It localises to the cell membrane. The catalysed reaction is di-trans,octa-cis-undecaprenyl diphospho-N-acetyl-alpha-D-muramoyl-L-alanyl-D-glutamyl-meso-2,6-diaminopimeloyl-D-alanyl-D-alanine + UDP-N-acetyl-alpha-D-glucosamine = di-trans,octa-cis-undecaprenyl diphospho-[N-acetyl-alpha-D-glucosaminyl-(1-&gt;4)]-N-acetyl-alpha-D-muramoyl-L-alanyl-D-glutamyl-meso-2,6-diaminopimeloyl-D-alanyl-D-alanine + UDP + H(+). The protein operates within cell wall biogenesis; peptidoglycan biosynthesis. In terms of biological role, cell wall formation. Catalyzes the transfer of a GlcNAc subunit on undecaprenyl-pyrophosphoryl-MurNAc-pentapeptide (lipid intermediate I) to form undecaprenyl-pyrophosphoryl-MurNAc-(pentapeptide)GlcNAc (lipid intermediate II). The protein is UDP-N-acetylglucosamine--N-acetylmuramyl-(pentapeptide) pyrophosphoryl-undecaprenol N-acetylglucosamine transferase of Baumannia cicadellinicola subsp. Homalodisca coagulata.